We begin with the raw amino-acid sequence, 886 residues long: Isoleucine--tRNA ligase (886 aa).

Positions 60 to 70 (PYANGDIHIGH) match the 'HIGH' region motif. Glu-546 serves as a coordination point for L-isoleucyl-5'-AMP. A 'KMSKS' region motif is present at residues 587–591 (KMSKS). Lys-590 provides a ligand contact to ATP. Zn(2+) is bound by residues Cys-856, Cys-859, Cys-870, and Cys-873.

This sequence belongs to the class-I aminoacyl-tRNA synthetase family. IleS type 1 subfamily. In terms of assembly, monomer. Zn(2+) is required as a cofactor.

It localises to the cytoplasm. It catalyses the reaction tRNA(Ile) + L-isoleucine + ATP = L-isoleucyl-tRNA(Ile) + AMP + diphosphate. Catalyzes the attachment of isoleucine to tRNA(Ile). As IleRS can inadvertently accommodate and process structurally similar amino acids such as valine, to avoid such errors it has two additional distinct tRNA(Ile)-dependent editing activities. One activity is designated as 'pretransfer' editing and involves the hydrolysis of activated Val-AMP. The other activity is designated 'posttransfer' editing and involves deacylation of mischarged Val-tRNA(Ile). This Mesomycoplasma hyopneumoniae (strain 7448) (Mycoplasma hyopneumoniae) protein is Isoleucine--tRNA ligase.